The following is a 1305-amino-acid chain: DNA-directed RNA polymerase subunit beta' (1305 aa).

Positions 59, 61, 74, and 77 each coordinate Zn(2+). 3 residues coordinate Mg(2+): Asp527, Asp529, and Asp531. Cys922, Cys997, Cys1004, and Cys1007 together coordinate Zn(2+).

Belongs to the RNA polymerase beta' chain family. As to quaternary structure, the RNAP catalytic core consists of 2 alpha, 1 beta, 1 beta' and 1 omega subunit. When a sigma factor is associated with the core the holoenzyme is formed, which can initiate transcription. The cofactor is Mg(2+). Zn(2+) serves as cofactor.

The catalysed reaction is RNA(n) + a ribonucleoside 5'-triphosphate = RNA(n+1) + diphosphate. DNA-dependent RNA polymerase catalyzes the transcription of DNA into RNA using the four ribonucleoside triphosphates as substrates. The chain is DNA-directed RNA polymerase subunit beta' from Ureaplasma urealyticum serovar 10 (strain ATCC 33699 / Western).